We begin with the raw amino-acid sequence, 280 residues long: Pantothenate synthetase (280 aa).

M26 to H33 serves as a coordination point for ATP. Residue H33 is the Proton donor of the active site. Q57 serves as a coordination point for (R)-pantoate. A beta-alanine-binding site is contributed by Q57. G145 to D148 is a binding site for ATP. Residue Q151 participates in (R)-pantoate binding. ATP contacts are provided by residues V174 and L182–R185.

This sequence belongs to the pantothenate synthetase family. In terms of assembly, homodimer.

It is found in the cytoplasm. The catalysed reaction is (R)-pantoate + beta-alanine + ATP = (R)-pantothenate + AMP + diphosphate + H(+). Its pathway is cofactor biosynthesis; (R)-pantothenate biosynthesis; (R)-pantothenate from (R)-pantoate and beta-alanine: step 1/1. In terms of biological role, catalyzes the condensation of pantoate with beta-alanine in an ATP-dependent reaction via a pantoyl-adenylate intermediate. The sequence is that of Pantothenate synthetase from Bordetella bronchiseptica (strain ATCC BAA-588 / NCTC 13252 / RB50) (Alcaligenes bronchisepticus).